The sequence spans 329 residues: Malate dehydrogenase (329 aa).

12–18 is an NAD(+) binding site; sequence GAAGQIG. Arginine 95 and arginine 101 together coordinate substrate. NAD(+) is bound by residues asparagine 108, glutamine 115, and 132–134; that span reads VGN. Substrate is bound by residues asparagine 134 and arginine 165. The active-site Proton acceptor is the histidine 190.

The protein belongs to the LDH/MDH superfamily. MDH type 2 family.

The enzyme catalyses (S)-malate + NAD(+) = oxaloacetate + NADH + H(+). Catalyzes the reversible oxidation of malate to oxaloacetate. This is Malate dehydrogenase from Bordetella petrii (strain ATCC BAA-461 / DSM 12804 / CCUG 43448).